Here is a 102-residue protein sequence, read N- to C-terminus: Outer membrane protein assembly factor BamE (102 aa).

Positions 1 to 20 are cleaved as a signal peptide; that stretch reads MNNYIKALLIIICFSSCSIS.

Belongs to the BamE family. Part of the Bam complex.

It localises to the cell outer membrane. In terms of biological role, part of the outer membrane protein assembly complex, which is involved in assembly and insertion of beta-barrel proteins into the outer membrane. This is Outer membrane protein assembly factor BamE from Buchnera aphidicola subsp. Acyrthosiphon pisum (strain APS) (Acyrthosiphon pisum symbiotic bacterium).